Here is a 96-residue protein sequence, read N- to C-terminus: Small ribosomal subunit protein bS6c (96 aa).

This sequence belongs to the bacterial ribosomal protein bS6 family.

The protein localises to the plastid. The protein resides in the chloroplast. In terms of biological role, binds together with bS18 to 16S ribosomal RNA. The sequence is that of Small ribosomal subunit protein bS6c (rps6) from Trieres chinensis (Marine centric diatom).